Here is a 723-residue protein sequence, read N- to C-terminus: Probable G-protein coupled receptor 149 (723 aa).

Topologically, residues 1-31 (MSVMPSNLSLNGTSFFAENHSIMDKPNEQRT) are extracellular. Residues N7, N11, and N19 are each glycosylated (N-linked (GlcNAc...) asparagine). The chain crosses the membrane as a helical span at residues 32-52 (LNVFLFCSTFIIAFTVLLGSI). At 53–69 (YSLVSLLKLQNKSTISM) the chain is on the cytoplasmic side. Residues 70–90 (IVTSLSIDDLISIVPVIIFML) form a helical membrane-spanning segment. Residues 91-106 (TQWSSDALPQPLCTTS) are Extracellular-facing. C103 and C181 form a disulfide bridge. A helical transmembrane segment spans residues 107 to 127 (ALIYLFQGISSNLKGSLIVSY). Topologically, residues 128-148 (NFYSINKTETMNCSASKRRVS) are cytoplasmic. Residues 149–169 (MVWAILSIWIVSLLICILPLC) traverse the membrane as a helical segment. Over 170–188 (GWGKYIPTTWGCFTDHASS) the chain is Extracellular. The helical transmembrane segment at 189–209 (YILFLFIVYSLCFCLLTVLSV) threads the bilayer. Topologically, residues 210–306 (PLTYQLLCSD…SFTVGFAQKR (97 aa)) are cytoplasmic. A helical transmembrane segment spans residues 307-327 (FSLILALTKVILWLPMMIQMV). Over 328–338 (VQHITGYQSFS) the chain is Extracellular. Residues 339–359 (FETLSFLLTLLAATVTPVFVL) form a helical membrane-spanning segment. Topologically, residues 360–723 (SEHWIHLPCG…RKREEDGNSN (364 aa)) are cytoplasmic. Residues 451–513 (TTDSARPGPA…ERRLSHEEGH (63 aa)) are disordered. Basic and acidic residues predominate over residues 501-513 (EGPERRLSHEEGH).

This sequence belongs to the G-protein coupled receptor 1 family. Specific expression in peripheral nervous system, including nerve growth factor-dependent sensory and sympathetic neurons, as well as enteric neurons.

Its subcellular location is the cell membrane. Orphan receptor. The protein is Probable G-protein coupled receptor 149 (GPR149) of Gallus gallus (Chicken).